The sequence spans 200 residues: Large ribosomal subunit protein uL4 (200 aa).

Residues 42–65 form a disordered region; the sequence is TRAQKTRSEVSGGGAKPWRQKGTG.

Belongs to the universal ribosomal protein uL4 family. Part of the 50S ribosomal subunit.

Functionally, one of the primary rRNA binding proteins, this protein initially binds near the 5'-end of the 23S rRNA. It is important during the early stages of 50S assembly. It makes multiple contacts with different domains of the 23S rRNA in the assembled 50S subunit and ribosome. Its function is as follows. Forms part of the polypeptide exit tunnel. The sequence is that of Large ribosomal subunit protein uL4 from Vibrio campbellii (strain ATCC BAA-1116).